The sequence spans 349 residues: Small ribosomal subunit protein uS2 (349 aa).

This sequence belongs to the universal ribosomal protein uS2 family.

The protein is Small ribosomal subunit protein uS2 of Methylobacterium nodulans (strain LMG 21967 / CNCM I-2342 / ORS 2060).